The following is a 284-amino-acid chain: Mevalonate kinase (284 aa).

ATP is bound at residue proline 86 to alanine 96. Aspartate 137 acts as the Proton acceptor in catalysis.

The protein belongs to the GHMP kinase family. Mevalonate kinase subfamily. As to quaternary structure, homodimer. It depends on Mg(2+) as a cofactor.

It is found in the cytoplasm. The catalysed reaction is (R)-mevalonate + ATP = (R)-5-phosphomevalonate + ADP + H(+). The protein operates within isoprenoid biosynthesis; isopentenyl diphosphate biosynthesis via mevalonate pathway; isopentenyl diphosphate from (R)-mevalonate: step 1/3. Its function is as follows. Catalyzes the phosphorylation of (R)-mevalonate (MVA) to (R)-mevalonate 5-phosphate (MVAP). Functions in the mevalonate (MVA) pathway leading to isopentenyl diphosphate (IPP), a key precursor for the biosynthesis of isoprenoid compounds such as archaeal membrane lipids. In Archaeoglobus fulgidus (strain ATCC 49558 / DSM 4304 / JCM 9628 / NBRC 100126 / VC-16), this protein is Mevalonate kinase.